We begin with the raw amino-acid sequence, 364 residues long: tRNA/tmRNA (uracil-C(5))-methyltransferase (364 aa).

Positions 188, 216, 221, 237, and 297 each coordinate S-adenosyl-L-methionine. Cysteine 322 serves as the catalytic Nucleophile. Catalysis depends on glutamate 356, which acts as the Proton acceptor.

This sequence belongs to the class I-like SAM-binding methyltransferase superfamily. RNA M5U methyltransferase family. TrmA subfamily.

It catalyses the reaction uridine(54) in tRNA + S-adenosyl-L-methionine = 5-methyluridine(54) in tRNA + S-adenosyl-L-homocysteine + H(+). The catalysed reaction is uridine(341) in tmRNA + S-adenosyl-L-methionine = 5-methyluridine(341) in tmRNA + S-adenosyl-L-homocysteine + H(+). In terms of biological role, dual-specificity methyltransferase that catalyzes the formation of 5-methyluridine at position 54 (m5U54) in all tRNAs, and that of position 341 (m5U341) in tmRNA (transfer-mRNA). This chain is tRNA/tmRNA (uracil-C(5))-methyltransferase, found in Colwellia psychrerythraea (strain 34H / ATCC BAA-681) (Vibrio psychroerythus).